A 312-amino-acid chain; its full sequence is Pre-mRNA-splicing factor 38A (312 aa).

Residues 1 to 179 form an N-terminal protein interaction domain region; that stretch reads MANRTVKDAH…VLEEAEQLEP (179 aa). 5 positions are modified to phosphoserine: S11, S193, S194, S209, and S226. The stretch at 170–204 forms a coiled coil; it reads VLEEAEQLEPRVSALEEDMDDVESSEEEEEEDEKL. Residues 181 to 312 are disordered; it reads VSALEEDMDD…SHKKSRRGNE (132 aa). Residues 184 to 202 show a composition bias toward acidic residues; that stretch reads LEEDMDDVESSEEEEEEDE. Basic and acidic residues predominate over residues 203–224; sequence KLERVPSPDHRRRSYRDLDKPR. Composition is skewed to basic residues over residues 225–294 and 301–312; these read RSPT…RSHS and KKSHKKSRRGNE.

The protein belongs to the PRP38 family. Component of the spliceosome B complex. Interacts (via N-terminal interaction domain) with ZMAT2 and MFAP1.

The protein resides in the nucleus. In terms of biological role, involved in pre-mRNA splicing as a component of the spliceosome. This Bos taurus (Bovine) protein is Pre-mRNA-splicing factor 38A (PRPF38A).